A 136-amino-acid chain; its full sequence is Glutamyl-tRNA(Gln) amidotransferase subunit C, mitochondrial (136 aa).

This sequence belongs to the GatC family. Subunit of the heterotrimeric GatCAB amidotransferase (AdT) complex, composed of A (QRSL1), B (GATB) and C (GATC) subunits.

It localises to the mitochondrion. The catalysed reaction is L-glutamyl-tRNA(Gln) + L-glutamine + ATP + H2O = L-glutaminyl-tRNA(Gln) + L-glutamate + ADP + phosphate + H(+). Its function is as follows. Allows the formation of correctly charged Gln-tRNA(Gln) through the transamidation of misacylated Glu-tRNA(Gln) in the mitochondria. The reaction takes place in the presence of glutamine and ATP through an activated gamma-phospho-Glu-tRNA(Gln). The polypeptide is Glutamyl-tRNA(Gln) amidotransferase subunit C, mitochondrial (Homo sapiens (Human)).